A 256-amino-acid chain; its full sequence is Phosphomannomutase (256 aa).

The active-site Nucleophile is aspartate 12. 2 residues coordinate Mg(2+): aspartate 12 and aspartate 14. The active-site Proton donor/acceptor is aspartate 14. Alpha-D-mannose 1-phosphate is bound by residues arginine 21, arginine 123, arginine 134, arginine 141, serine 179, and aspartate 181. Residue aspartate 209 participates in Mg(2+) binding.

The protein belongs to the eukaryotic PMM family. In terms of assembly, homodimer.

Its subcellular location is the cytoplasm. The catalysed reaction is alpha-D-mannose 1-phosphate = D-mannose 6-phosphate. It functions in the pathway nucleotide-sugar biosynthesis; GDP-alpha-D-mannose biosynthesis; alpha-D-mannose 1-phosphate from D-fructose 6-phosphate: step 2/2. In terms of biological role, involved in the synthesis of the GDP-mannose and dolichol-phosphate-mannose required for a number of critical mannosyl transfer reactions. The protein is Phosphomannomutase (SEC53) of Encephalitozoon cuniculi (strain GB-M1) (Microsporidian parasite).